We begin with the raw amino-acid sequence, 279 residues long: Troponin T, fast skeletal muscle (279 aa).

The span at 1 to 21 (MSDEEVEHVEEQYEEEEEAQE) shows a compositional bias: acidic residues. The interval 1 to 82 (MSDEEVEHVE…EKVDFDDIQK (82 aa)) is disordered. Ser2 carries the post-translational modification N-acetylserine. The residue at position 2 (Ser2) is a Phosphoserine. 2 stretches are compositionally biased toward basic and acidic residues: residues 28 to 49 (EVHE…ALED) and 70 to 82 (PEGE…DIQK). Position 98 is a phosphoserine (Ser98). Over residues 121–163 (RAERAEQQRIRAEKERERQNRLAEEKARREEEDAKRRAEEDLK) the composition is skewed to basic and acidic residues. Positions 121 to 200 (RAERAEQQRI…TAREMKKKIL (80 aa)) are disordered. A phosphoserine mark is found at Ser169, Ser176, and Ser177. Residues 191–200 (TAREMKKKIL) are compositionally biased toward basic and acidic residues. Residue Ser213 is modified to Phosphoserine. Position 229 is a phosphotyrosine (Tyr229).

The protein belongs to the troponin T family.

Functionally, troponin T is the tropomyosin-binding subunit of troponin, the thin filament regulatory complex which confers calcium-sensitivity to striated muscle actomyosin ATPase activity. The chain is Troponin T, fast skeletal muscle (TNNT3) from Oryctolagus cuniculus (Rabbit).